A 219-amino-acid chain; its full sequence is Protein-L-isoaspartate O-methyltransferase 2 (219 aa).

Ser67 is an active-site residue.

The protein belongs to the methyltransferase superfamily. L-isoaspartyl/D-aspartyl protein methyltransferase family.

The protein localises to the cytoplasm. The enzyme catalyses [protein]-L-isoaspartate + S-adenosyl-L-methionine = [protein]-L-isoaspartate alpha-methyl ester + S-adenosyl-L-homocysteine. Functionally, catalyzes the methyl esterification of L-isoaspartyl residues in peptides and proteins that result from spontaneous decomposition of normal L-aspartyl and L-asparaginyl residues. It plays a role in the repair and/or degradation of damaged proteins. The sequence is that of Protein-L-isoaspartate O-methyltransferase 2 from Nitrosococcus oceani (strain ATCC 19707 / BCRC 17464 / JCM 30415 / NCIMB 11848 / C-107).